We begin with the raw amino-acid sequence, 1063 residues long: Unconventional myosin-Ic (1063 aa).

Residue Met1 is modified to N-acetylmethionine. Thr10 bears the Phosphoserine mark. A Myosin motor domain is found at Gly47–Glu731. Residues Asn88, Tyr96, Ser139–Glu148, and Asn192–Ser196 contribute to the ATP site. Lys383 is subject to N6-methyllysine. Position 408 is a phosphoserine (Ser408). Lys486 is subject to N6-acetyllysine. Ser536 is subject to Phosphoserine. The interval Leu608–Asp630 is actin-binding. IQ domains are found at residues Arg734 to Val757 and Lys758 to Thr786. 2 positions are modified to phosphoserine: Ser864 and Ser1041. Positions Lys885–Arg1059 constitute a TH1 domain.

The protein belongs to the TRAFAC class myosin-kinesin ATPase superfamily. Myosin family. Interacts (via its IQ motifs) with CABP1 and CIB1; the interaction with CABP1 and CIB1 is calcium-dependent. Interacts (via tail domain) with PLEKHB1 (via PH domain); the interaction is not affected by the presence or absence of calcium and CALM. Interacts with POLR1A. Interacts with POLR2A. Component of the B-WICH complex, at least composed of SMARCA5/SNF2H, BAZ1B/WSTF, SF3B1, DEK, MYO1C, ERCC6, MYBBP1A and DDX21. Interacts (via its IQ motifs) with CALM; this precludes interaction with YWHAB. Interacts with YWHAB; this precludes interaction with CALM. Interacts with RPS6. Interacts with actin. Interacts with LLPH. Interacts with GLUT4. Interacts (via its IQ motifs) with SH3BGRL3; the interaction is dependent on calcium and takes place at membrane ruffles. Isoform 2 contains a N-acetylmethionine at position 1. In terms of tissue distribution, isoform 3 is expressed in small intestine, pancreas, brain, kidney, skin, heart muscle, testis, striated muscle, spleen, liver and lung (at protein level). Expressed in brain, testis, adrenal glands, thymus, spleen, kidney, lung, heart, cochlea and vestibule. Expressed in sensory hair cells of the inner ear. Expressed in adipocytes.

The protein resides in the cytoplasm. It localises to the nucleus. It is found in the cell cortex. The protein localises to the cell projection. Its subcellular location is the stereocilium membrane. The protein resides in the cytoplasmic vesicle. It localises to the ruffle membrane. It is found in the nucleolus. The protein localises to the nucleoplasm. In terms of biological role, myosins are actin-based motor molecules with ATPase activity. Unconventional myosins serve in intracellular movements. Their highly divergent tails bind to membranous compartments, which then are moved relative to actin filaments. Involved in glucose transporter recycling in response to insulin by regulating movement of intracellular GLUT4-containing vesicles to the plasma membrane. Component of the hair cell's (the sensory cells of the inner ear) adaptation-motor complex. Acts as a mediator of adaptation of mechanoelectrical transduction in stereocilia of vestibular hair cells. Binds phosphoinositides and links the actin cytoskeleton to cellular membranes. Involved in regulation of transcription. Associated with transcriptional active ribosomal genes. Appears to cooperate with the WICH chromatin-remodeling complex to facilitate transcription. Necessary for the formation of the first phosphodiester bond during transcription initiation. This is Unconventional myosin-Ic (Myo1c) from Mus musculus (Mouse).